The following is a 737-amino-acid chain: Catalase-peroxidase (737 aa).

The disordered stretch occupies residues 1 to 33 (MPEATEHPPIGEAQTEPAQSGCPMVIKPPVEGG). The tryptophyl-tyrosyl-methioninium (Trp-Tyr) (with M-261) cross-link spans 107-235 (WHAAGTYRVQ…LGASHMGLIY (129 aa)). His-108 (proton acceptor) is an active-site residue. The segment at residues 235-261 (YVNPEGPEGNPDPIAAAIDIRETFGRM) is a cross-link (tryptophyl-tyrosyl-methioninium (Tyr-Met) (with W-107)). His-276 contacts heme.

The protein belongs to the peroxidase family. Peroxidase/catalase subfamily. As to quaternary structure, homodimer or homotetramer. The cofactor is heme b. Formation of the three residue Trp-Tyr-Met cross-link is important for the catalase, but not the peroxidase activity of the enzyme.

It carries out the reaction H2O2 + AH2 = A + 2 H2O. The enzyme catalyses 2 H2O2 = O2 + 2 H2O. Its function is as follows. Bifunctional enzyme with both catalase and broad-spectrum peroxidase activity. May play a role in polycyclic aromatic hydrocarbon (PAH) metabolism. The protein is Catalase-peroxidase of Mycolicibacterium vanbaalenii (Mycobacterium vanbaalenii).